The chain runs to 141 residues: Ribonuclease P protein component (141 aa).

Disordered stretches follow at residues 37-56 (RTEEESNAAKTGDNPRVGFT) and 114-141 (RRITAKGERRSGGKRRTERPEPGPVNGK). Basic and acidic residues predominate over residues 114–124 (RRITAKGERRS).

Belongs to the RnpA family. As to quaternary structure, consists of a catalytic RNA component (M1 or rnpB) and a protein subunit.

The enzyme catalyses Endonucleolytic cleavage of RNA, removing 5'-extranucleotides from tRNA precursor.. In terms of biological role, RNaseP catalyzes the removal of the 5'-leader sequence from pre-tRNA to produce the mature 5'-terminus. It can also cleave other RNA substrates such as 4.5S RNA. The protein component plays an auxiliary but essential role in vivo by binding to the 5'-leader sequence and broadening the substrate specificity of the ribozyme. The polypeptide is Ribonuclease P protein component (Brucella melitensis biotype 1 (strain ATCC 23456 / CCUG 17765 / NCTC 10094 / 16M)).